We begin with the raw amino-acid sequence, 262 residues long: Type III pantothenate kinase (262 aa).

Asp5–Lys12 contacts ATP. Residues Tyr102 and Gly110 to Arg113 each bind substrate. Asp112 functions as the Proton acceptor in the catalytic mechanism. Asp132 is a binding site for K(+). Thr135 serves as a coordination point for ATP. Thr190 is a substrate binding site.

It belongs to the type III pantothenate kinase family. Homodimer. The cofactor is NH4(+). It depends on K(+) as a cofactor.

The protein resides in the cytoplasm. It carries out the reaction (R)-pantothenate + ATP = (R)-4'-phosphopantothenate + ADP + H(+). It participates in cofactor biosynthesis; coenzyme A biosynthesis; CoA from (R)-pantothenate: step 1/5. Functionally, catalyzes the phosphorylation of pantothenate (Pan), the first step in CoA biosynthesis. The protein is Type III pantothenate kinase of Idiomarina loihiensis (strain ATCC BAA-735 / DSM 15497 / L2-TR).